Here is a 912-residue protein sequence, read N- to C-terminus: Protein translocase subunit SecA (912 aa).

ATP is bound by residues Q87, 105-109 (GEGKT), and D508. The tract at residues 869–912 (EQMQGGNAPVPVSQVTRDEPKVGRNDPCPCGSGKKYKHCHGQLS) is disordered. C896, C898, C907, and H908 together coordinate Zn(2+). Positions 902-912 (KKYKHCHGQLS) are enriched in basic residues.

It belongs to the SecA family. Monomer and homodimer. Part of the essential Sec protein translocation apparatus which comprises SecA, SecYEG and auxiliary proteins SecDF-YajC and YidC. Zn(2+) serves as cofactor.

The protein localises to the cell inner membrane. It is found in the cytoplasm. It carries out the reaction ATP + H2O + cellular proteinSide 1 = ADP + phosphate + cellular proteinSide 2.. Part of the Sec protein translocase complex. Interacts with the SecYEG preprotein conducting channel. Has a central role in coupling the hydrolysis of ATP to the transfer of proteins into and across the cell membrane, serving both as a receptor for the preprotein-SecB complex and as an ATP-driven molecular motor driving the stepwise translocation of polypeptide chains across the membrane. This Xanthomonas axonopodis pv. citri (strain 306) protein is Protein translocase subunit SecA.